We begin with the raw amino-acid sequence, 206 residues long: Holliday junction branch migration complex subunit RuvA (206 aa).

Positions 1–64 are domain I; it reads MIAKLTGLLD…EDNIQLFGFA (64 aa). The domain II stretch occupies residues 65-143; that stretch reads DTEERDWFRL…SFGAPAPAAA (79 aa). A flexible linker region spans residues 144–154; the sequence is TAGKGGAAPAG. The tract at residues 154 to 206 is domain III; the sequence is GPAGAVADAVSALVNLGYRRVEAFTAVNAVAQRLGPEAGVSDLIRAGLKELSP.

Belongs to the RuvA family. Homotetramer. Forms an RuvA(8)-RuvB(12)-Holliday junction (HJ) complex. HJ DNA is sandwiched between 2 RuvA tetramers; dsDNA enters through RuvA and exits via RuvB. An RuvB hexamer assembles on each DNA strand where it exits the tetramer. Each RuvB hexamer is contacted by two RuvA subunits (via domain III) on 2 adjacent RuvB subunits; this complex drives branch migration. In the full resolvosome a probable DNA-RuvA(4)-RuvB(12)-RuvC(2) complex forms which resolves the HJ.

It localises to the cytoplasm. In terms of biological role, the RuvA-RuvB-RuvC complex processes Holliday junction (HJ) DNA during genetic recombination and DNA repair, while the RuvA-RuvB complex plays an important role in the rescue of blocked DNA replication forks via replication fork reversal (RFR). RuvA specifically binds to HJ cruciform DNA, conferring on it an open structure. The RuvB hexamer acts as an ATP-dependent pump, pulling dsDNA into and through the RuvAB complex. HJ branch migration allows RuvC to scan DNA until it finds its consensus sequence, where it cleaves and resolves the cruciform DNA. The polypeptide is Holliday junction branch migration complex subunit RuvA (Rhodospirillum centenum (strain ATCC 51521 / SW)).